Consider the following 277-residue polypeptide: Putative acetylornithine deacetylase (277 aa).

It carries out the reaction N(2)-acetyl-L-ornithine + H2O = L-ornithine + acetate. It functions in the pathway amino-acid biosynthesis; L-arginine biosynthesis; L-ornithine from N(2)-acetyl-L-ornithine (linear): step 1/1. The polypeptide is Putative acetylornithine deacetylase (argE) (Leptospira biflexa).